The following is a 435-amino-acid chain: 5-methylthioadenosine/S-adenosylhomocysteine deaminase (435 aa).

The Zn(2+) site is built by histidine 65 and histidine 67. Positions 94, 150, and 189 each coordinate substrate. Histidine 216 contacts Zn(2+). Residues glutamate 219 and aspartate 304 each coordinate substrate. A Zn(2+)-binding site is contributed by aspartate 304.

It belongs to the metallo-dependent hydrolases superfamily. MTA/SAH deaminase family. It depends on Zn(2+) as a cofactor.

The catalysed reaction is S-adenosyl-L-homocysteine + H2O + H(+) = S-inosyl-L-homocysteine + NH4(+). It carries out the reaction S-methyl-5'-thioadenosine + H2O + H(+) = S-methyl-5'-thioinosine + NH4(+). Functionally, catalyzes the deamination of 5-methylthioadenosine and S-adenosyl-L-homocysteine into 5-methylthioinosine and S-inosyl-L-homocysteine, respectively. Is also able to deaminate adenosine. The protein is 5-methylthioadenosine/S-adenosylhomocysteine deaminase of Bacillus cereus (strain B4264).